Consider the following 338-residue polypeptide: Mitoferrin-1 (338 aa).

The segment at 1-37 is disordered; the sequence is MELRRGGVGSQAAGRRMDGDCRDGGCGSKDAGSEDYE. Solcar repeat units follow at residues 43–131, 141–225, and 232–326; these read ASVS…MKRT, NSHL…LQEQ, and YNPQ…FKYF. 6 helical membrane-spanning segments follow: residues 45–64, 106–125, 143–162, 200–219, 234–253, and 301–320; these read VSTH…SIMY, GLNV…FACY, HLAN…AVMN, SYTT…FITY, PQSH…AATT, and GIQA…WSVY.

This sequence belongs to the mitochondrial carrier (TC 2.A.29) family. As to quaternary structure, interacts with ACB10; this interaction stabilizes SLC25A37 and enhances the function of SLC25A37 to import mitochondrial iron during erythroid differentiation.

The protein resides in the mitochondrion inner membrane. It catalyses the reaction Fe(2+)(in) = Fe(2+)(out). Its function is as follows. Mitochondrial iron transporter that specifically mediates iron uptake in developing erythroid cells, thereby playing an essential role in heme biosynthesis. The sequence is that of Mitoferrin-1 (Slc25a37) from Rattus norvegicus (Rat).